Reading from the N-terminus, the 356-residue chain is Biotin synthase (356 aa).

The region spanning 51–270 (NKVQCNQLLN…IALARIMMPL (220 aa)) is the Radical SAM core domain. Positions 66, 70, and 73 each coordinate [4Fe-4S] cluster. [2Fe-2S] cluster contacts are provided by cysteine 110, cysteine 141, cysteine 201, and arginine 274. The segment at 310 to 356 (PGDNKDRSLFDRLGLEPRDDHGVHEHSSHSHTHDQGHDHGPHGHSHG) is disordered. Residues 312–350 (DNKDRSLFDRLGLEPRDDHGVHEHSSHSHTHDQGHDHGP) are compositionally biased toward basic and acidic residues.

It belongs to the radical SAM superfamily. Biotin synthase family. In terms of assembly, homodimer. [4Fe-4S] cluster serves as cofactor. [2Fe-2S] cluster is required as a cofactor.

The catalysed reaction is (4R,5S)-dethiobiotin + (sulfur carrier)-SH + 2 reduced [2Fe-2S]-[ferredoxin] + 2 S-adenosyl-L-methionine = (sulfur carrier)-H + biotin + 2 5'-deoxyadenosine + 2 L-methionine + 2 oxidized [2Fe-2S]-[ferredoxin]. Its pathway is cofactor biosynthesis; biotin biosynthesis; biotin from 7,8-diaminononanoate: step 2/2. Catalyzes the conversion of dethiobiotin (DTB) to biotin by the insertion of a sulfur atom into dethiobiotin via a radical-based mechanism. In Rhodopseudomonas palustris (strain BisB18), this protein is Biotin synthase.